The following is a 399-amino-acid chain: Nicotinate phosphoribosyltransferase (399 aa).

At His221 the chain carries Phosphohistidine; by autocatalysis.

The protein belongs to the NAPRTase family. In terms of processing, transiently phosphorylated on a His residue during the reaction cycle. Phosphorylation strongly increases the affinity for substrates and increases the rate of nicotinate D-ribonucleotide production. Dephosphorylation regenerates the low-affinity form of the enzyme, leading to product release.

It carries out the reaction nicotinate + 5-phospho-alpha-D-ribose 1-diphosphate + ATP + H2O = nicotinate beta-D-ribonucleotide + ADP + phosphate + diphosphate. It functions in the pathway cofactor biosynthesis; NAD(+) biosynthesis; nicotinate D-ribonucleotide from nicotinate: step 1/1. In terms of biological role, catalyzes the synthesis of beta-nicotinate D-ribonucleotide from nicotinate and 5-phospho-D-ribose 1-phosphate at the expense of ATP. The sequence is that of Nicotinate phosphoribosyltransferase from Buchnera aphidicola subsp. Acyrthosiphon pisum (strain 5A).